A 68-amino-acid polypeptide reads, in one-letter code: Copper transport protein ATOX1 (68 aa).

One can recognise an HMA domain in the interval 1–63 (MPKHEFSVDM…TLGKTGKAVS (63 aa)). Cysteine 12 and cysteine 15 together coordinate Cu cation. Phosphoserine is present on serine 47. Lysine 60 is subject to N6-acetyllysine.

This sequence belongs to the ATX1 family. In terms of assembly, homodimer. Interacts with ATP7B. Interacts with ATP7A. Interacts (via dimer form) with SLC31A1 (via C-terminal domain); this interaction improves ATOX1 stability and controls intracellular Cu(I) levels.

Functionally, binds and deliver cytosolic copper to the copper ATPase proteins. May be important in cellular antioxidant defense. The polypeptide is Copper transport protein ATOX1 (Bos taurus (Bovine)).